We begin with the raw amino-acid sequence, 333 residues long: Transcription factor MYB94 (333 aa).

HTH myb-type domains follow at residues 9–65 (KIGV…RPGI) and 66–116 (KRGN…KKKL). 2 DNA-binding regions (H-T-H motif) span residues 37-61 (WRSV…TNYL) and 89-112 (WAAI…NTHL). The segment covering 134–154 (KDFSISNKNTTSHQSSNSSKG) has biased composition (polar residues). Disordered stretches follow at residues 134–157 (KDFS…GQWE) and 183–218 (PTNF…YPSG). Residues 196 to 209 (SSSSSSTTTTTTTT) are compositionally biased toward low complexity.

In terms of tissue distribution, expressed in germinating seeds, rosette and cauline leaves, flower buds, open flowers, stems and developing siliques.

The protein localises to the nucleus. Its function is as follows. Transcription activator involved in the activation of cuticular wax biosynthesis under drought stress. Binds directly to the promoters of genes involved in cuticular wax biosynthesis. Transactivates WSD1, KCS2/DAISY, CER1, CER2, FAR3 and ECR genes. Functions together with MYB96 in the activation of cuticular wax biosynthesis. In Arabidopsis thaliana (Mouse-ear cress), this protein is Transcription factor MYB94.